The chain runs to 501 residues: 4,4'-diapophytoene desaturase (4,4'-diaponeurosporene-forming) (501 aa).

Residue 5–17 participates in FAD binding; that stretch reads VVGAGVTGLAAAA.

This sequence belongs to the carotenoid/retinoid oxidoreductase family. CrtN subfamily.

The enzyme catalyses 15-cis-4,4'-diapophytoene + 3 FAD + 3 H(+) = all-trans-4,4'-diaponeurosporene + 3 FADH2. The protein operates within carotenoid biosynthesis; staphyloxanthin biosynthesis; staphyloxanthin from farnesyl diphosphate: step 2/5. Involved in the biosynthesis of the yellow-orange carotenoid staphyloxanthin, which plays a role in the virulence via its protective function against oxidative stress. Catalyzes three successive dehydrogenation reactions that lead to the introduction of three double bonds into 4,4'-diapophytoene (dehydrosqualene), with 4,4'-diapophytofluene and 4,4'-diapo-zeta-carotene as intermediates, and 4,4'-diaponeurosporene (the major deep-yellow pigment in staphylococci strains) as the end product. This chain is 4,4'-diapophytoene desaturase (4,4'-diaponeurosporene-forming), found in Staphylococcus haemolyticus (strain JCSC1435).